A 673-amino-acid polypeptide reads, in one-letter code: UvrABC system protein B (673 aa).

The 158-residue stretch at Glu26–Arg183 folds into the Helicase ATP-binding domain. Residue Gly39–Thr46 participates in ATP binding. A Beta-hairpin motif is present at residues Tyr92–Val115. The Helicase C-terminal domain maps to Gln431–Leu597. The UVR domain maps to Gln633–Leu668.

It belongs to the UvrB family. Forms a heterotetramer with UvrA during the search for lesions. Interacts with UvrC in an incision complex.

It is found in the cytoplasm. Functionally, the UvrABC repair system catalyzes the recognition and processing of DNA lesions. A damage recognition complex composed of 2 UvrA and 2 UvrB subunits scans DNA for abnormalities. Upon binding of the UvrA(2)B(2) complex to a putative damaged site, the DNA wraps around one UvrB monomer. DNA wrap is dependent on ATP binding by UvrB and probably causes local melting of the DNA helix, facilitating insertion of UvrB beta-hairpin between the DNA strands. Then UvrB probes one DNA strand for the presence of a lesion. If a lesion is found the UvrA subunits dissociate and the UvrB-DNA preincision complex is formed. This complex is subsequently bound by UvrC and the second UvrB is released. If no lesion is found, the DNA wraps around the other UvrB subunit that will check the other stand for damage. This chain is UvrABC system protein B, found in Klebsiella pneumoniae subsp. pneumoniae (strain ATCC 700721 / MGH 78578).